Reading from the N-terminus, the 163-residue chain is uncharacterized protein (163 aa).

The span at 1–10 (MGVPRAREGR) shows a compositional bias: basic and acidic residues. Residues 1–163 (MGVPRAREGR…WSFTPLRWGS (163 aa)) form a disordered region.

This is an uncharacterized protein from Homo sapiens (Human).